Consider the following 141-residue polypeptide: Phosphoribosyl-AMP cyclohydrolase (141 aa).

A Mg(2+)-binding site is contributed by Asp-88. Cys-89 contacts Zn(2+). Asp-90 and Asp-92 together coordinate Mg(2+). Cys-109 and Cys-116 together coordinate Zn(2+).

The protein belongs to the PRA-CH family. In terms of assembly, homodimer. Requires Mg(2+) as cofactor. Zn(2+) is required as a cofactor.

The protein localises to the cytoplasm. The enzyme catalyses 1-(5-phospho-beta-D-ribosyl)-5'-AMP + H2O = 1-(5-phospho-beta-D-ribosyl)-5-[(5-phospho-beta-D-ribosylamino)methylideneamino]imidazole-4-carboxamide. Its pathway is amino-acid biosynthesis; L-histidine biosynthesis; L-histidine from 5-phospho-alpha-D-ribose 1-diphosphate: step 3/9. Catalyzes the hydrolysis of the adenine ring of phosphoribosyl-AMP. This chain is Phosphoribosyl-AMP cyclohydrolase, found in Paracidovorax citrulli (strain AAC00-1) (Acidovorax citrulli).